A 224-amino-acid polypeptide reads, in one-letter code: dTTP/UTP pyrophosphatase (224 aa).

Asp-77 functions as the Proton acceptor in the catalytic mechanism.

This sequence belongs to the Maf family. YhdE subfamily. Requires a divalent metal cation as cofactor.

The protein localises to the cytoplasm. It catalyses the reaction dTTP + H2O = dTMP + diphosphate + H(+). The catalysed reaction is UTP + H2O = UMP + diphosphate + H(+). In terms of biological role, nucleoside triphosphate pyrophosphatase that hydrolyzes dTTP and UTP. May have a dual role in cell division arrest and in preventing the incorporation of modified nucleotides into cellular nucleic acids. This is dTTP/UTP pyrophosphatase from Dehalococcoides mccartyi (strain ATCC BAA-2266 / KCTC 15142 / 195) (Dehalococcoides ethenogenes (strain 195)).